Here is a 435-residue protein sequence, read N- to C-terminus: Elongation factor 1-alpha (435 aa).

One can recognise a tr-type G domain in the interval 4–227 (KPHLNLIVIG…YLDQLELPPK (224 aa)). Residues 13–20 (GHIDHGKS) are G1. 13-20 (GHIDHGKS) contributes to the GTP binding site. Residue Ser20 participates in Mg(2+) binding. Residues 69-73 (GVTIN) form a G2 region. A G3 region spans residues 90–93 (DAPG). GTP contacts are provided by residues 90–94 (DAPGH) and 152–155 (NKMD). The G4 stretch occupies residues 152-155 (NKMD). The G5 stretch occupies residues 193–195 (VAP).

Belongs to the TRAFAC class translation factor GTPase superfamily. Classic translation factor GTPase family. EF-Tu/EF-1A subfamily.

The protein localises to the cytoplasm. It catalyses the reaction GTP + H2O = GDP + phosphate + H(+). In terms of biological role, GTP hydrolase that promotes the GTP-dependent binding of aminoacyl-tRNA to the A-site of ribosomes during protein biosynthesis. The chain is Elongation factor 1-alpha from Saccharolobus solfataricus (strain ATCC 35092 / DSM 1617 / JCM 11322 / P2) (Sulfolobus solfataricus).